A 396-amino-acid polypeptide reads, in one-letter code: MKKFFICKSKFFKNPTFSGLLLILFCFLAIFISNTNFWKTYNYIINYPLIKINTHDKNFSLTNIVNDILMTFFFLEIGIEIKHEMLVGSLKNKSRAILPGIAAIGGMIFPALIYNFITKEDSSISSGWAITVATDIAFAVGVLKILGHSIPHSLLIFLLSLAIFDDIGAILIIAFFYSNHIDQYMILLSTLVILTILSINYLRVTCIYIYIIFGILLWESIFLSGIHSTISGVILGILMPHSSYLSSSKYEKSMAFLKKSLSFLNKYFILPIFAFFNSGINFSNFENLSSSLLPFGIFFGLVLGKPIGVFLFSYLSVKFKLSKLPVGISFKEIAGISFLCGIGFTMSIFISNLAFQNINEKIIYIAKFSILISSIVSSVIGFLFLYFLYKKIKLKN.

11 consecutive transmembrane segments (helical) span residues 17–37 (FSGL…NTNF), 59–79 (FSLT…EIGI), 97–117 (ILPG…YNFI), 127–147 (GWAI…KILG), 156–176 (IFLL…IAFF), 181–201 (IDQY…SINY), 206–226 (CIYI…LSGI), 260–280 (SLSF…NSGI), 292–312 (LLPF…VFLF), 333–353 (IAGI…ISNL), and 368–388 (FSIL…LYFL).

It belongs to the NhaA Na(+)/H(+) (TC 2.A.33) antiporter family.

The protein localises to the cell membrane. The enzyme catalyses Na(+)(in) + 2 H(+)(out) = Na(+)(out) + 2 H(+)(in). Its function is as follows. Na(+)/H(+) antiporter that extrudes sodium in exchange for external protons. The chain is Na(+)/H(+) antiporter NhaA from Wigglesworthia glossinidia brevipalpis.